A 364-amino-acid polypeptide reads, in one-letter code: Phosphoserine aminotransferase (364 aa).

Residue Arg-46 coordinates L-glutamate. Pyridoxal 5'-phosphate contacts are provided by residues 80-81 (AR), Trp-106, Thr-157, Asp-176, and Gln-199. Position 200 is an N6-(pyridoxal phosphate)lysine (Lys-200). 241-242 (NT) lines the pyridoxal 5'-phosphate pocket.

This sequence belongs to the class-V pyridoxal-phosphate-dependent aminotransferase family. SerC subfamily. As to quaternary structure, homodimer. Pyridoxal 5'-phosphate is required as a cofactor.

Its subcellular location is the cytoplasm. It catalyses the reaction O-phospho-L-serine + 2-oxoglutarate = 3-phosphooxypyruvate + L-glutamate. It carries out the reaction 4-(phosphooxy)-L-threonine + 2-oxoglutarate = (R)-3-hydroxy-2-oxo-4-phosphooxybutanoate + L-glutamate. The protein operates within amino-acid biosynthesis; L-serine biosynthesis; L-serine from 3-phospho-D-glycerate: step 2/3. It participates in cofactor biosynthesis; pyridoxine 5'-phosphate biosynthesis; pyridoxine 5'-phosphate from D-erythrose 4-phosphate: step 3/5. Functionally, catalyzes the reversible conversion of 3-phosphohydroxypyruvate to phosphoserine and of 3-hydroxy-2-oxo-4-phosphonooxybutanoate to phosphohydroxythreonine. This Vibrio vulnificus (strain CMCP6) protein is Phosphoserine aminotransferase.